A 279-amino-acid chain; its full sequence is Acyl-[acyl-carrier-protein]--UDP-N-acetylglucosamine O-acyltransferase (279 aa).

It belongs to the transferase hexapeptide repeat family. LpxA subfamily. Homotrimer.

Its subcellular location is the cytoplasm. The catalysed reaction is a (3R)-hydroxyacyl-[ACP] + UDP-N-acetyl-alpha-D-glucosamine = a UDP-3-O-[(3R)-3-hydroxyacyl]-N-acetyl-alpha-D-glucosamine + holo-[ACP]. The protein operates within glycolipid biosynthesis; lipid IV(A) biosynthesis; lipid IV(A) from (3R)-3-hydroxytetradecanoyl-[acyl-carrier-protein] and UDP-N-acetyl-alpha-D-glucosamine: step 1/6. Functionally, involved in the biosynthesis of lipid A, a phosphorylated glycolipid that anchors the lipopolysaccharide to the outer membrane of the cell. In Chlamydia pneumoniae (Chlamydophila pneumoniae), this protein is Acyl-[acyl-carrier-protein]--UDP-N-acetylglucosamine O-acyltransferase.